Reading from the N-terminus, the 254-residue chain is Low affinity immunoglobulin gamma Fc region receptor III-A (254 aa).

The signal sequence occupies residues 1–16 (MWQLLLPTALLLLVSA). The Extracellular portion of the chain corresponds to 17 to 208 (GMRTEDLPKA…ISSFFPPGYQ (192 aa)). Ig-like C2-type domains lie at 24–105 (PKAV…LEVH) and 107–189 (GWLL…VNIT). Cysteines 47 and 89 form a disulfide. Residues Asn-56, Asn-63, and Asn-92 are each glycosylated (N-linked (GlcNAc...) asparagine). Residues Cys-128 and Cys-172 are joined by a disulfide bond. N-linked (GlcNAc...) asparagine glycosylation is found at Asn-180 and Asn-187. The helical transmembrane segment at 209-229 (VSFCLVMVLLFAVDTGLYFSV) threads the bilayer. Residues 230–254 (KTNIRSSTRDWKDHKFKWRKDPQDK) lie on the Cytoplasmic side of the membrane. Ser-236 carries the phosphoserine; by PKC modification. Thr-237 bears the Phosphothreonine; by PKC mark.

In terms of assembly, forms a heterooligomeric complex with ITAM-containing signaling subunits, either a homodimer of CD247, a homodimer of FCER1G or a heterodimer of CD247 and FCER1G. Interacts (via transmembrane domain) with signaling subunits; this interaction is a prerequisite for receptor complex expression on the cell surface and intracellular signal transduction. Binds the Fc region of antigen-complexed IgG with a preference for IgG1 and IgG3 isotypes. Interacts with CD2; this interaction is involved in NK cell activation and cytotoxicity. Interacts with S100A4; this interaction inhibits PKC-dependent phosphorylation of FCGR3A. Glycosylated. Contains high mannose- and complex-type oligosaccharides. Glycosylation at Asn-180 is mandatory for high affinity binding to the Fc and for discrimination between fucosylated and afucosylated IgG glycoforms. Post-translationally, undergoes rapid ectodomain shedding upon NK cell stimulation. The soluble form is produced by a proteolytic cleavage mediated by ADAM17. Repeated stimulation causes receptor shedding, a mechanism that allows for increased NK cell motility and detachment from opsonized target cells while avoiding activation-induced NK cell apoptosis. In terms of processing, phosphorylated at RSSTR motif by PKC. The relevant physiological PKCs might be PRKCI, PRKCG, PRKCE, PRKCH and PRKCQ. In terms of tissue distribution, expressed in natural killer cells (at protein level). Expressed in a subset of circulating monocytes (at protein level).

Its subcellular location is the cell membrane. It localises to the secreted. Functionally, receptor for the invariable Fc fragment of immunoglobulin gamma (IgG). Optimally activated upon binding of clustered antigen-IgG complexes displayed on cell surfaces, triggers lysis of antibody-coated cells, a process known as antibody-dependent cellular cytotoxicity (ADCC). Does not bind free monomeric IgG, thus avoiding inappropriate effector cell activation in the absence of antigenic trigger. Mediates IgG effector functions on natural killer (NK) cells. Binds antigen-IgG complexes generated upon infection and triggers NK cell-dependent cytokine production and degranulation to limit viral load and propagation. Involved in the generation of memory-like adaptive NK cells capable to produce high amounts of IFNG and to efficiently eliminate virus-infected cells via ADCC. Regulates NK cell survival and proliferation, in particular by preventing NK cell progenitor apoptosis. Fc-binding subunit that associates with CD247 and/or FCER1G adapters to form functional signaling complexes. Following the engagement of antigen-IgG complexes, triggers phosphorylation of immunoreceptor tyrosine-based activation motif (ITAM)-containing adapters with subsequent activation of phosphatidylinositol 3-kinase signaling and sustained elevation of intracellular calcium that ultimately drive NK cell activation. The ITAM-dependent signaling coupled to receptor phosphorylation by PKC mediates robust intracellular calcium flux that leads to production of pro-inflammatory cytokines, whereas in the absence of receptor phosphorylation it mainly activates phosphatidylinositol 3-kinase signaling leading to cell degranulation. Costimulates NK cells and trigger lysis of target cells independently of IgG binding. Mediates the antitumor activities of therapeutic antibodies. Upon ligation on monocytes triggers TNFA-dependent ADCC of IgG-coated tumor cells. Mediates enhanced ADCC in response to afucosylated IgGs. (Microbial infection) Involved in Dengue virus pathogenesis via antibody-dependent enhancement (ADE) mechanism. Secondary infection with Dengue virus triggers elevated levels of afucosylated non-neutralizing IgG1s with reactivity to viral envelope/E protein. Viral antigen-IgG1 complexes bind with high affinity to FCGR3A, facilitating virus entry in myeloid cells and subsequent viral replication. In Homo sapiens (Human), this protein is Low affinity immunoglobulin gamma Fc region receptor III-A.